Here is a 1281-residue protein sequence, read N- to C-terminus: Dynactin subunit 1 (1281 aa).

A disordered region spans residues 1–25; the sequence is MAQSKRHVYSRTPSGSRMSAEASAR. A CAP-Gly domain is found at 48 to 90; sequence GATLFATGKWVGVILDEAKGKNDGTVQGRKYFTCDEGHGIFVR. Positions 99 to 225 are disordered; the sequence is DGADTTSPET…EEEGLRAQVR (127 aa). Residues 102 to 114 show a composition bias toward polar residues; the sequence is DTTSPETPDSSAS. Phosphothreonine occurs at positions 108, 145, 146, and 147. Over residues 129–152 the composition is skewed to basic residues; sequence SKLRGPKPKKAPTARKTTTRRPKP. Residues 161-205 are compositionally biased toward low complexity; sequence AGASSSLGPSGSASAGELSSSEPSTPAQTPLAAPIIPTPALTSPG. Residues Ser-179 and Ser-212 each carry the phosphoserine modification. Residues 214–225 are compositionally biased toward basic and acidic residues; the sequence is SKEEEGLRAQVR. Coiled coils occupy residues 217 to 540 and 952 to 1043; these read EEGL…QQEA and IKEL…QSKR. Positions 911 to 1281 are interaction with HPS6; sequence EYDAERPPSK…LHQLHDRLIS (371 aa). The interval 1065-1084 is disordered; it reads GEEQQRGGAPGQAPGIVPGP.

Belongs to the dynactin 150 kDa subunit family. Monomer and homodimer. Subunit of dynactin, a multiprotein complex part of a tripartite complex with dynein and a adapter, such as BICDL1, BICD2 or HOOK3. The dynactin complex is built around ACTR1A/ACTB filament and consists of an actin-related filament composed of a shoulder domain, a pointed end and a barbed end. Its length is defined by its flexible shoulder domain. The soulder is composed of 2 DCTN1 subunits, 4 DCTN2 and 2 DCTN3. DCTN1/p150(glued) binds directly to microtubules and to cytoplasmic dynein. The 4 DCNT2 (via N-terminus) bind the ACTR1A filament and act as molecular rulers to determine the length. The pointed end is important for binding dynein-dynactin cargo adapters. Consists of 4 subunits: ACTR10, DCNT4, DCTN5 and DCTN6. The barbed end is composed of a CAPZA1:CAPZB heterodimers, which binds ACTR1A/ACTB filament and dynactin and stabilizes dynactin. Interacts with the C-terminus of MAPRE1, MAPRE2 and MAPRE3. Interacts (via C-terminus) with SNX6. Interacts with CLN3, DYNAP, ECPAS and FBXL5. Interacts with MISP; this interaction regulates its distribution at the cell cortex. Interacts with CEP131. Interacts with CEP126. Interacts with CLIP1. Interacts with dynein intermediate chain and dynein heavy chain. Interacts with PLK1 (via POLO-box domain). Interacts with TBCB. Binds preferentially to tyrosinated microtubules than to detyrosinated microtubules. Interacts with PARD6A. Interacts with HPS6. Interacts with KIF3A. Interacts with BICD2. Interacts with DST (isoform 9). Interacts with DST (isoform 1). Identified in a complex with MREG and RILP. Interacts with BCCIP (isoform 2/alpha). Interacts with DCDC1. Interacts with AKNA. Interacts with DYNC1I2. Interacts with RUFY3 and RUFY4. Post-translationally, ubiquitinated by a SCF complex containing FBXL5, leading to its degradation by the proteasome. In terms of processing, phosphorylation by SLK at Thr-145, Thr-146 and Thr-147 targets DCTN1 to the centrosome. It is uncertain if SLK phosphorylates all three threonines or one or two of them. PLK1-mediated phosphorylation at Ser-179 is essential for its localization in the nuclear envelope, promotes its dissociation from microtubules during early mitosis and positively regulates nuclear envelope breakdown during prophase.

The protein resides in the cytoplasm. It localises to the cytoskeleton. It is found in the microtubule organizing center. The protein localises to the centrosome. Its subcellular location is the centriole. The protein resides in the spindle. It localises to the nucleus envelope. It is found in the cell cortex. Functionally, part of the dynactin complex that activates the molecular motor dynein for ultra-processive transport along microtubules. Plays a key role in dynein-mediated retrograde transport of vesicles and organelles along microtubules by recruiting and tethering dynein to microtubules. Binds to both dynein and microtubules providing a link between specific cargos, microtubules and dynein. Essential for targeting dynein to microtubule plus ends, recruiting dynein to membranous cargos and enhancing dynein processivity (the ability to move along a microtubule for a long distance without falling off the track). Can also act as a brake to slow the dynein motor during motility along the microtubule. Can regulate microtubule stability by promoting microtubule formation, nucleation and polymerization and by inhibiting microtubule catastrophe in neurons. Inhibits microtubule catastrophe by binding both to microtubules and to tubulin, leading to enhanced microtubule stability along the axon. Plays a role in metaphase spindle orientation. Plays a role in centriole cohesion and subdistal appendage organization and function. Its recruitment to the centriole in a KIF3A-dependent manner is essential for the maintenance of centriole cohesion and the formation of subdistal appendage. Also required for microtubule anchoring at the mother centriole. Plays a role in primary cilia formation. In Sus scrofa (Pig), this protein is Dynactin subunit 1 (DCTN1).